A 217-amino-acid chain; its full sequence is Flagellin B1 (217 aa).

The propeptide occupies 1–12; it reads MKVFEFLKGKRG.

Belongs to the archaeal flagellin family.

Its subcellular location is the archaeal flagellum. Functionally, flagellin is the subunit protein which polymerizes to form the filaments of archaeal flagella. In Methanocaldococcus jannaschii (strain ATCC 43067 / DSM 2661 / JAL-1 / JCM 10045 / NBRC 100440) (Methanococcus jannaschii), this protein is Flagellin B1 (flaB1).